The primary structure comprises 673 residues: Ion-translocating oxidoreductase complex subunit C (673 aa).

2 4Fe-4S ferredoxin-type domains span residues M368–Y397 and K407–F436. [4Fe-4S] cluster is bound by residues C377, C380, C383, C387, C416, C419, C422, and C426. The interval E529–P554 is disordered.

This sequence belongs to the 4Fe4S bacterial-type ferredoxin family. RnfC subfamily. As to quaternary structure, the complex is composed of six subunits: RsxA, RsxB, RsxC, RsxD, RsxE and RsxG. It depends on [4Fe-4S] cluster as a cofactor.

Its subcellular location is the cell inner membrane. Functionally, part of a membrane-bound complex that couples electron transfer with translocation of ions across the membrane. Required to maintain the reduced state of SoxR. This is Ion-translocating oxidoreductase complex subunit C from Salmonella arizonae (strain ATCC BAA-731 / CDC346-86 / RSK2980).